The sequence spans 168 residues: Auxin-responsive protein IAA1 (168 aa).

Positions 1-74 (MEVTNGLNLK…NRKNNNNKNV (74 aa)) are disordered. Positions 14–18 (LRLGL) match the EAR-like (transcriptional repression) motif. Residues 23–34 (EEQQLELSCVRS) are compositionally biased toward polar residues. Positions 74-161 (VSYVKVSMDG…SCQKLRIMKG (88 aa)) constitute a PB1 domain.

It belongs to the Aux/IAA family. In terms of assembly, homodimers and heterodimers. Interacts with the auxin-responsive protein IAA2. Interacts with TPL. In terms of processing, phosphorylated by phytochrome A in vitro. In terms of tissue distribution, preferentially expressed in stems, leaves and flowers.

It is found in the nucleus. In terms of biological role, aux/IAA proteins are short-lived transcriptional factors that function as repressors of early auxin response genes at low auxin concentrations. Repression is thought to result from the interaction with auxin response factors (ARFs), proteins that bind to the auxin-responsive promoter element (AuxRE). Formation of heterodimers with ARF proteins may alter their ability to modulate early auxin response genes expression. The polypeptide is Auxin-responsive protein IAA1 (IAA1) (Arabidopsis thaliana (Mouse-ear cress)).